The chain runs to 360 residues: Lipid-A-disaccharide synthase (360 aa).

This sequence belongs to the LpxB family.

It carries out the reaction a lipid X + a UDP-2-N,3-O-bis[(3R)-3-hydroxyacyl]-alpha-D-glucosamine = a lipid A disaccharide + UDP + H(+). It functions in the pathway bacterial outer membrane biogenesis; LPS lipid A biosynthesis. In terms of biological role, condensation of UDP-2,3-diacylglucosamine and 2,3-diacylglucosamine-1-phosphate to form lipid A disaccharide, a precursor of lipid A, a phosphorylated glycolipid that anchors the lipopolysaccharide to the outer membrane of the cell. The sequence is that of Lipid-A-disaccharide synthase from Helicobacter pylori (strain Shi470).